We begin with the raw amino-acid sequence, 251 residues long: Ubiquinone/menaquinone biosynthesis C-methyltransferase UbiE (251 aa).

Residues Thr74, Asp95, and 123–124 (NA) contribute to the S-adenosyl-L-methionine site.

It belongs to the class I-like SAM-binding methyltransferase superfamily. MenG/UbiE family.

It carries out the reaction a 2-demethylmenaquinol + S-adenosyl-L-methionine = a menaquinol + S-adenosyl-L-homocysteine + H(+). The catalysed reaction is a 2-methoxy-6-(all-trans-polyprenyl)benzene-1,4-diol + S-adenosyl-L-methionine = a 5-methoxy-2-methyl-3-(all-trans-polyprenyl)benzene-1,4-diol + S-adenosyl-L-homocysteine + H(+). Its pathway is quinol/quinone metabolism; menaquinone biosynthesis; menaquinol from 1,4-dihydroxy-2-naphthoate: step 2/2. The protein operates within cofactor biosynthesis; ubiquinone biosynthesis. Functionally, methyltransferase required for the conversion of demethylmenaquinol (DMKH2) to menaquinol (MKH2) and the conversion of 2-polyprenyl-6-methoxy-1,4-benzoquinol (DDMQH2) to 2-polyprenyl-3-methyl-6-methoxy-1,4-benzoquinol (DMQH2). The sequence is that of Ubiquinone/menaquinone biosynthesis C-methyltransferase UbiE from Shewanella baltica (strain OS155 / ATCC BAA-1091).